Here is a 250-residue protein sequence, read N- to C-terminus: uncharacterized protein (250 aa).

Serine 15, leucine 17, aspartate 36, aspartate 56, valine 57, and cysteine 82 together coordinate NAD(+). Serine 143 serves as a coordination point for substrate. 4 residues coordinate NAD(+): tyrosine 156, lysine 160, phenylalanine 189, and threonine 191. Catalysis depends on tyrosine 156, which acts as the Proton acceptor.

Belongs to the short-chain dehydrogenases/reductases (SDR) family.

This is an uncharacterized protein from Mycobacterium tuberculosis (strain CDC 1551 / Oshkosh).